We begin with the raw amino-acid sequence, 410 residues long: WD repeat and FYVE domain-containing protein 1 (410 aa).

WD repeat units follow at residues 22-61 (GHQD…QYWP), 66-105 (TMAS…NKMN), 112-150 (AHQN…NMLG), 153-192 (FFTS…CSVI), 197-236 (GHEG…GRTL), and 240-279 (GHHD…EEAP). An FYVE-type zinc finger spans residues 281–352 (WLESDSCQKC…VCDSCYDSIK (72 aa)). 8 residues coordinate Zn(2+): Cys287, Cys290, Cys314, Cys317, Cys322, Cys325, Cys344, and Cys347. The stretch at 364–403 (EGKHNISHMSMDIARGLMVTCGTDRIVKIWDMTPVVGCSL) is one WD 7 repeat. At Ser408 the chain carries Phosphoserine.

In terms of assembly, binds PtdIns3P in vitro with high specificity over other phosphoinositides. Interacts (via WD repeat 2) with tyrosine-phosphorylated TLR3 (via TIR domain) in response to poly(I:C). Interacts with TICAM1 in response to poly(I:C). Interacts with TLR4 in response to LPS.

The protein resides in the early endosome. Functionally, positively regulates TLR3- and TLR4-mediated signaling pathways by bridging the interaction between TLR3 or TLR4 and TICAM1. Promotes TLR3/4 ligand-induced activation of transcription factors IRF3 and NF-kappa-B, as well as the production of IFN-beta and inflammatory cytokines. The sequence is that of WD repeat and FYVE domain-containing protein 1 (WDFY1) from Homo sapiens (Human).